A 187-amino-acid polypeptide reads, in one-letter code: UPF0398 protein MW1336 (187 aa).

It belongs to the UPF0398 family.

The chain is UPF0398 protein MW1336 from Staphylococcus aureus (strain MW2).